We begin with the raw amino-acid sequence, 141 residues long: Hemoglobin subunit alpha-D (141 aa).

Residues 1–141 (MLTAEDKKLI…VAAVLAEKYR (141 aa)) enclose the Globin domain. Positions 58 and 87 each coordinate heme b.

This sequence belongs to the globin family. As to quaternary structure, heterotetramer of two alpha-D chains and two beta chains. Red blood cells.

In terms of biological role, involved in oxygen transport from the lung to the various peripheral tissues. The chain is Hemoglobin subunit alpha-D (HBAD) from Accipiter gentilis (Northern goshawk).